A 195-amino-acid chain; its full sequence is Peptidyl-tRNA hydrolase (195 aa).

Y17 serves as a coordination point for tRNA. The Proton acceptor role is filled by H22. 3 residues coordinate tRNA: F68, N70, and N116.

It belongs to the PTH family. As to quaternary structure, monomer.

Its subcellular location is the cytoplasm. It carries out the reaction an N-acyl-L-alpha-aminoacyl-tRNA + H2O = an N-acyl-L-amino acid + a tRNA + H(+). Its function is as follows. Hydrolyzes ribosome-free peptidyl-tRNAs (with 1 or more amino acids incorporated), which drop off the ribosome during protein synthesis, or as a result of ribosome stalling. Catalyzes the release of premature peptidyl moieties from peptidyl-tRNA molecules trapped in stalled 50S ribosomal subunits, and thus maintains levels of free tRNAs and 50S ribosomes. The protein is Peptidyl-tRNA hydrolase of Shewanella loihica (strain ATCC BAA-1088 / PV-4).